A 765-amino-acid polypeptide reads, in one-letter code: Cyanobacterial phytochrome A (765 aa).

Positions I20–R510 are chromophore binding domain. A GAF domain is found at N152–E320. C259 contacts a tetrapyrrole. Positions V535 to G748 constitute a Histidine kinase domain. H538 is modified (phosphohistidine; by autocatalysis).

In the N-terminal section; belongs to the phytochrome family. Post-translationally, contains one covalently linked tetrapyrrole chromophore.

It carries out the reaction ATP + protein L-histidine = ADP + protein N-phospho-L-histidine.. In terms of biological role, photoreceptor which exists in two forms that are reversibly interconvertible by light: the R form that absorbs maximally in the red region of the spectrum and the FR form that absorbs maximally in the far-red region. The polypeptide is Cyanobacterial phytochrome A (aphA) (Nostoc sp. (strain PCC 7120 / SAG 25.82 / UTEX 2576)).